The primary structure comprises 291 residues: 4-hydroxy-tetrahydrodipicolinate synthase (291 aa).

T45 serves as a coordination point for pyruvate. Catalysis depends on Y133, which acts as the Proton donor/acceptor. K161 (schiff-base intermediate with substrate) is an active-site residue. I203 contacts pyruvate.

Belongs to the DapA family. As to quaternary structure, homotetramer.

The protein localises to the cytoplasm. It catalyses the reaction L-aspartate 4-semialdehyde + pyruvate = (2S,4S)-4-hydroxy-2,3,4,5-tetrahydrodipicolinate + H2O + H(+). The protein operates within amino-acid biosynthesis; L-lysine biosynthesis via DAP pathway; (S)-tetrahydrodipicolinate from L-aspartate: step 3/4. Is allosterically feedback inhibited by lysine; the N.meningitidis enzyme is significantly more sensitive to lysine than the E.coli enzyme. Shows substrate inhibition by (S)-ASA, with a Ki of 1.7 mM. Its function is as follows. Catalyzes the condensation of (S)-aspartate-beta-semialdehyde [(S)-ASA] and pyruvate to 4-hydroxy-tetrahydrodipicolinate (HTPA). In Neisseria meningitidis serogroup B (strain ATCC BAA-335 / MC58), this protein is 4-hydroxy-tetrahydrodipicolinate synthase.